We begin with the raw amino-acid sequence, 604 residues long: Beta-alanine transporter (604 aa).

At 1-23 (MDFDEVLREVGSFGLYQKVIICS) the chain is on the cytoplasmic side. A helical transmembrane segment spans residues 24 to 44 (VLLPAALPCAFHAYSQLFIAA). The Extracellular segment spans residues 45-151 (TPQHFCRVPE…QEWNLVCDRS (107 aa)). Residues N68 and N88 are each glycosylated (N-linked (GlcNAc...) asparagine). Residues 152–172 (FLVTLALVVFGVGGLLGNYVF) form a helical membrane-spanning segment. Residues 173 to 182 (GYLVDLWGRR) lie on the Cytoplasmic side of the membrane. Residues 183–203 (PSFYAYLLLEIIACAASAFAW) form a helical membrane-spanning segment. The Extracellular portion of the chain corresponds to 204 to 212 (NYYTWLGLR). Residues 213 to 233 (FVVGLTVPAILASPYVLAIEL) form a helical membrane-spanning segment. Residues 234–243 (VGPERRVFCT) lie on the Cytoplasmic side of the membrane. Residues 244 to 264 (IVSNIAYSLGLVVLAGVIYIV) form a helical membrane-spanning segment. At 265–268 (RDWR) the chain is on the extracellular side. Residues 269 to 289 (ELSLAVSMPLLMLFSCFFVLP) traverse the membrane as a helical segment. Residues 290 to 362 (ESPRWLMAVG…FRGPNMRRKT (73 aa)) lie on the Cytoplasmic side of the membrane. Residues 363-383 (LIITLIWFANTSVYVGLSYYA) form a helical membrane-spanning segment. Over 384-390 (PALGGDE) the chain is Extracellular. A helical transmembrane segment spans residues 391-411 (IWNFFLAGAVELPTYLLLWPG). The Cytoplasmic segment spans residues 412–418 (LSYFGRR). The helical transmembrane segment at 419–439 (WILFISMLVGGVACVATFLYP) threads the bilayer. At 440–442 (DIT) the chain is on the extracellular side. The helical transmembrane segment at 443-463 (LLLYCVGKMGISSSFVVLPLM) threads the bilayer. Residues 464 to 473 (ASELYPTVVR) lie on the Cytoplasmic side of the membrane. A helical transmembrane segment spans residues 474–494 (GLGMSFSSVISMVGPIVIPMI). Topologically, residues 495 to 501 (NHMGQQM) are extracellular. The helical transmembrane segment at 502-522 (LVLPLIVMGALLILGGFASLL) threads the bilayer. The Cytoplasmic segment spans residues 523 to 604 (LPETRNRNLP…SICKNEMRTL (82 aa)).

The protein belongs to the major facilitator (TC 2.A.1) superfamily. Organic cation transporter (TC 2.A.1.19) family. As to expression, expressed in the head and predominantly in the retinal pigment cells of the compound eye.

Its subcellular location is the cell membrane. In terms of biological role, beta-alanine transporter required for the uptake of beta-alanine by the glia. Required for the recycling process of the neurotransmitter histamine in photoreceptor neurons of the compound eye and therefore for photoreceptor synaptic transmission. Following histamine release from photoreceptors and its uptake by glia, histamine is conjugated to beta-alanine by e/Ebony to form the inactive metabolite, carcinine. This Drosophila melanogaster (Fruit fly) protein is Beta-alanine transporter.